The chain runs to 207 residues: MAEYTLPDLDYDYSALEPHISGQINELHHSKHHAAYVAGANTALEKLEAAREAGDHSAIFLHEKNLAFHLGGHVNHSIWWKNLSPNGGDKPVGELAAAIDDQFGSFDKFRAQFTAAANGLQGSGWAVLGYDTLGQKLLTFQLYDQQANVPLGIIPLLQVDMWEHAFYLQYKNVKADYVTAFWNVVNWADVQDRFGKAVNQGKGLIFG.

Mn(2+) contacts are provided by histidine 28, histidine 76, aspartate 160, and histidine 164.

The protein belongs to the iron/manganese superoxide dismutase family. The cofactor is Mn(2+).

It carries out the reaction 2 superoxide + 2 H(+) = H2O2 + O2. Functionally, destroys superoxide anion radicals which are normally produced within the cells and which are toxic to biological systems. The polypeptide is Superoxide dismutase [Mn] (sodA) (Nocardia asteroides).